Here is a 185-residue protein sequence, read N- to C-terminus: Elongation factor P (185 aa).

It belongs to the elongation factor P family.

The protein localises to the cytoplasm. Its pathway is protein biosynthesis; polypeptide chain elongation. Functionally, involved in peptide bond synthesis. Stimulates efficient translation and peptide-bond synthesis on native or reconstituted 70S ribosomes in vitro. Probably functions indirectly by altering the affinity of the ribosome for aminoacyl-tRNA, thus increasing their reactivity as acceptors for peptidyl transferase. In Nostoc punctiforme (strain ATCC 29133 / PCC 73102), this protein is Elongation factor P.